The primary structure comprises 166 residues: Regulatory protein RecX (166 aa).

The protein belongs to the RecX family.

The protein resides in the cytoplasm. Functionally, modulates RecA activity. The chain is Regulatory protein RecX from Salmonella choleraesuis (strain SC-B67).